The primary structure comprises 341 residues: Protein pelota homolog (341 aa).

The protein belongs to the eukaryotic release factor 1 family. Pelota subfamily. As to quaternary structure, monomer. It depends on a divalent metal cation as a cofactor.

It localises to the cytoplasm. Its function is as follows. May function in recognizing stalled ribosomes, interact with stem-loop structures in stalled mRNA molecules, and effect endonucleolytic cleavage of the mRNA. May play a role in the release non-functional ribosomes and degradation of damaged mRNAs. Has endoribonuclease activity. This Methanoregula boonei (strain DSM 21154 / JCM 14090 / 6A8) protein is Protein pelota homolog.